A 1161-amino-acid chain; its full sequence is Perforin-like protein 1 (1161 aa).

A helical transmembrane segment spans residues 67-86 (LWITFVCLLTLHMFGLSSAV). The tract at residues 154–329 (PEALNEVPTK…LGDSSALDLF (176 aa)) is disordered. Composition is skewed to basic and acidic residues over residues 162–177 (TKVE…DKTE) and 184–194 (ADHKSLLEGRS). The segment covering 201-211 (PDDDFDFLFED) has biased composition (acidic residues). Residues 222-234 (NKGTSSDETSPGD) show a composition bias toward polar residues. Positions 238-249 (GEGSSASDSLLS) are enriched in low complexity. N-linked (GlcNAc...) asparagine glycosylation is present at Asn257. Over residues 264–283 (NQKRITHPKSKAQHQKKVTK) the composition is skewed to basic residues. The span at 309-322 (NTQADDSQRQSLGD) shows a compositional bias: polar residues. N-linked (GlcNAc...) asparagine glycosylation is present at Asn344. A disordered region spans residues 353–381 (AANDGGLFSSSGMGPTGASDETSANPLGS). Residues 361–378 (SSSGMGPTGASDETSANP) are compositionally biased toward polar residues. An MACPF domain is found at 463–817 (LSAVYTKATK…LTPQDLSALT (355 aa)). A disulfide bridge connects residues Cys539 and Cys602. N-linked (GlcNAc...) asparagine glycosylation occurs at Asn550. Residues 554–589 (YQNELSVDASLQGGDPIGLNSFSASTGYRDFAKEVS) traverse the membrane as a beta stranded segment. Asn618 carries an N-linked (GlcNAc...) asparagine glycan. Cys643 and Cys657 are oxidised to a cystine. A beta stranded membrane pass occupies residues 694 to 740 (RSEVEKMRNMGIDVKTQLKMQLGGVSGGAGQGTSSKKNQSSSEYQMN). The tract at residues 716-736 (GGVSGGAGQGTSSKKNQSSSE) is disordered. Residue Asn755 is glycosylated (N-linked (GlcNAc...) asparagine). Intrachain disulfides connect Cys845–Cys900, Cys874–Cys881, Cys928–Cys981, Cys957–Cys964, Cys1019–Cys1080, and Cys1047–Cys1054. Residues Asn1022, Asn1050, and Asn1111 are each glycosylated (N-linked (GlcNAc...) asparagine). The segment at 1094-1149 (VGKAKGNGKKKKGKKGKNKTNAPNEVEEGQQLGADSPSQVSVPADADSGPTSKTMS) is disordered. Residues 1099-1111 (GNGKKKKGKKGKN) show a composition bias toward basic residues.

Belongs to the MPEG1 family. In terms of assembly, homooligomer; forms a homooligomeric pore.

The protein resides in the parasitophorous vacuole membrane. The protein localises to the cytoplasmic vesicle. It localises to the secretory vesicle. Its subcellular location is the microneme membrane. Its function is as follows. Pore-forming protein that promotes parasite exit from host cells: mediates formation of a pore in the parasitophorous vacuolar membrane, leading to membrane permeabilization, thereby facilitating parasite egress from host cells. May also form a pore in the host plasma membrane. Preferentially binds inner leaflet lipids, such as phosphatidylethanolamine (PE) or phosphatidylserine (PS). The sequence is that of Perforin-like protein 1 from Toxoplasma gondii (strain ATCC 50861 / VEG).